Reading from the N-terminus, the 118-residue chain is NADPH-dependent 7-cyano-7-deazaguanine reductase (118 aa).

Residue Cys31 is the Thioimide intermediate of the active site. Asp38 serves as the catalytic Proton donor. Substrate is bound by residues 53-55 (VEL) and 72-73 (YE).

It belongs to the GTP cyclohydrolase I family. QueF type 1 subfamily.

Its subcellular location is the cytoplasm. It carries out the reaction 7-aminomethyl-7-carbaguanine + 2 NADP(+) = 7-cyano-7-deazaguanine + 2 NADPH + 3 H(+). It participates in tRNA modification; tRNA-queuosine biosynthesis. In terms of biological role, catalyzes the NADPH-dependent reduction of 7-cyano-7-deazaguanine (preQ0) to 7-aminomethyl-7-deazaguanine (preQ1). In Chlorobium phaeobacteroides (strain BS1), this protein is NADPH-dependent 7-cyano-7-deazaguanine reductase.